Here is a 197-residue protein sequence, read N- to C-terminus: MIDSIVGTIQEVFNNYVILNYNNIYIKIFCNSTKFSEFLGKEKRVYVSLKFNENLSELECYGFLTREERELFLKLQKVTGVGSKLALQILSSIDYQQLIVEIAKGNVARLEKVKGIGKKTASRIILELKETLKKEFKVASTSGTEEKTYEKLEEISLALLSLGYEIDEINQVLSSEDFSELSLEDGIKLALKKLSKI.

The domain I stretch occupies residues 1-64 (MIDSIVGTIQ…LSELECYGFL (64 aa)). Residues 65–143 (TREERELFLK…KEFKVASTSG (79 aa)) form a domain II region. The interval 144 to 152 (TEEKTYEKL) is flexible linker. The tract at residues 152-197 (LEEISLALLSLGYEIDEINQVLSSEDFSELSLEDGIKLALKKLSKI) is domain III.

It belongs to the RuvA family. In terms of assembly, homotetramer. Forms an RuvA(8)-RuvB(12)-Holliday junction (HJ) complex. HJ DNA is sandwiched between 2 RuvA tetramers; dsDNA enters through RuvA and exits via RuvB. An RuvB hexamer assembles on each DNA strand where it exits the tetramer. Each RuvB hexamer is contacted by two RuvA subunits (via domain III) on 2 adjacent RuvB subunits; this complex drives branch migration. In the full resolvosome a probable DNA-RuvA(4)-RuvB(12)-RuvC(2) complex forms which resolves the HJ.

It is found in the cytoplasm. Its function is as follows. The RuvA-RuvB-RuvC complex processes Holliday junction (HJ) DNA during genetic recombination and DNA repair, while the RuvA-RuvB complex plays an important role in the rescue of blocked DNA replication forks via replication fork reversal (RFR). RuvA specifically binds to HJ cruciform DNA, conferring on it an open structure. The RuvB hexamer acts as an ATP-dependent pump, pulling dsDNA into and through the RuvAB complex. HJ branch migration allows RuvC to scan DNA until it finds its consensus sequence, where it cleaves and resolves the cruciform DNA. The chain is Holliday junction branch migration complex subunit RuvA from Caldicellulosiruptor saccharolyticus (strain ATCC 43494 / DSM 8903 / Tp8T 6331).